A 133-amino-acid chain; its full sequence is Mediator of RNA polymerase II transcription subunit 10 (133 aa).

The span at 1 to 13 (MSTEASTGETPEF) shows a compositional bias: polar residues. Residues 1–28 (MSTEASTGETPEFQSYDHRGSPTQEAMK) form a disordered region. The span at 15–28 (SYDHRGSPTQEAMK) shows a compositional bias: basic and acidic residues.

The protein belongs to the Mediator complex subunit 10 family. In terms of assembly, component of the Mediator complex.

The protein localises to the nucleus. Component of the Mediator complex, a coactivator involved in the regulated transcription of nearly all RNA polymerase II-dependent genes. Mediator functions as a bridge to convey information from gene-specific regulatory proteins to the basal RNA polymerase II transcription machinery. Mediator is recruited to promoters by direct interactions with regulatory proteins and serves as a scaffold for the assembly of a functional preinitiation complex with RNA polymerase II and the general transcription factors. The polypeptide is Mediator of RNA polymerase II transcription subunit 10 (NUT2) (Phaeosphaeria nodorum (strain SN15 / ATCC MYA-4574 / FGSC 10173) (Glume blotch fungus)).